The chain runs to 429 residues: Serine hydroxymethyltransferase (429 aa).

(6S)-5,6,7,8-tetrahydrofolate-binding positions include L126 and 130-132 (GHL). K235 carries the post-translational modification N6-(pyridoxal phosphate)lysine. Residue 359–361 (SPF) coordinates (6S)-5,6,7,8-tetrahydrofolate.

Belongs to the SHMT family. As to quaternary structure, homodimer. The cofactor is pyridoxal 5'-phosphate.

It is found in the cytoplasm. The catalysed reaction is (6R)-5,10-methylene-5,6,7,8-tetrahydrofolate + glycine + H2O = (6S)-5,6,7,8-tetrahydrofolate + L-serine. Its pathway is one-carbon metabolism; tetrahydrofolate interconversion. The protein operates within amino-acid biosynthesis; glycine biosynthesis; glycine from L-serine: step 1/1. Functionally, catalyzes the reversible interconversion of serine and glycine with tetrahydrofolate (THF) serving as the one-carbon carrier. This reaction serves as the major source of one-carbon groups required for the biosynthesis of purines, thymidylate, methionine, and other important biomolecules. Also exhibits THF-independent aldolase activity toward beta-hydroxyamino acids, producing glycine and aldehydes, via a retro-aldol mechanism. The protein is Serine hydroxymethyltransferase of Synechococcus sp. (strain CC9311).